The sequence spans 941 residues: Protocadherin alpha-12 (941 aa).

The first 29 residues, 1-29 (MVIIGPRGPGSQRLLLSLLLLAAWEVGSG), serve as a signal peptide directing secretion. Cadherin domains follow at residues 30–133 (QLHY…PPVF), 134–242 (RERE…GPAF), 243–350 (DKPS…VPEV), 351–455 (MVTS…APAF), 456–565 (AQPE…APAL), and 581–678 (VPRS…APKT). Residues 30–697 (QLHYSVYEEA…DPEAALVDIN (668 aa)) are Extracellular-facing. N-linked (GlcNAc...) asparagine glycans are attached at residues N257 and N265. Residue N548 is glycosylated (N-linked (GlcNAc...) asparagine). The helical transmembrane segment at 698-718 (VYLIIAICAVSSLLVLTLLLY) threads the bilayer. Topologically, residues 719 to 941 (TALRCSAPPT…GNSTTDNSDQ (223 aa)) are cytoplasmic. PXXP repeat units lie at residues 734-737 (PGKP), 790-793 (PRQP), 823-826 (PGGP), 863-866 (GPGN), and 882-885 (PGSP). Positions 734–885 (PGKPTLVCSS…PDKFIIPGSP (152 aa)) are 5 X 4 AA repeats of P-X-X-P. The segment at 818–941 (ILRAGPGGPD…GNSTTDNSDQ (124 aa)) is disordered. Basic and acidic residues predominate over residues 900–914 (DKSDFITFGKKEETK).

Its subcellular location is the cell membrane. Potential calcium-dependent cell-adhesion protein. May be involved in the establishment and maintenance of specific neuronal connections in the brain. In Homo sapiens (Human), this protein is Protocadherin alpha-12 (PCDHA12).